Consider the following 237-residue polypeptide: Homeobox protein Nkx-3.1 (237 aa).

The segment covering 1-14 (MLRVAEPREPRVEA) has biased composition (basic and acidic residues). Disordered regions lie at residues 1–96 (MLRV…EPES) and 108–130 (EHNP…RSRA). Over residues 24–34 (PTQSKRLTSFL) the composition is skewed to polar residues. 2 stretches are compositionally biased toward basic and acidic residues: residues 38–47 (ILRDRAERHG) and 57–71 (PDPR…DKAG). Residues 125-184 (QKRSRAAFSHTQVIELERKFSHQKYLSAPERAHLAKNLKLTETQVKIWFQNRRYKTKRKQ) constitute a DNA-binding region (homeobox).

This sequence belongs to the NK-3 homeobox family. In terms of assembly, interacts with serum response factor (SRF). Interacts with SPDEF. Interacts with WDR77. Interacts with TOPORS which polyubiquitinates NKX3-1 and induces its proteasomal degradation. Interacts with FEM1B. In terms of processing, ubiquitinated by TOPORS; monoubiquitinated at several residues and also polyubiquitinated on single residues. In terms of tissue distribution, expressed mostly in the male urogenital tract, with highest expression in the epithelial cells lining the ducts of anterior, dorsolateral and ventral prostate and in the bulbourethral gland, and much lower in the seminal vesicle and the testis. Expression in the prostate increases during sexual maturation and is drastically reduced following castration. Expressed also in brain (hippocampus and external granular layer of the cerebral cortex), kidney (intralobular arteries), thymus and adrenal and salivary glands.

It localises to the nucleus. Its function is as follows. Transcription factor, which binds preferentially the consensus sequence 5'-TAAGT[AG]-3' and can behave as a transcriptional repressor. Plays an important role in normal prostate development, regulating proliferation of glandular epithelium and in the formation of ducts in prostate. Acts as a tumor suppressor controlling prostate carcinogenesis, as shown by the ability to suppress growth and tumorigenicity of prostate carcinoma cells. Plays a role in the formation of minor salivary glands (particularly palatine and lingual glands). This Mus musculus (Mouse) protein is Homeobox protein Nkx-3.1.